Here is a 162-residue protein sequence, read N- to C-terminus: Ribosome maturation factor RimP (162 aa).

The protein belongs to the RimP family.

Its subcellular location is the cytoplasm. In terms of biological role, required for maturation of 30S ribosomal subunits. This Syntrophotalea carbinolica (strain DSM 2380 / NBRC 103641 / GraBd1) (Pelobacter carbinolicus) protein is Ribosome maturation factor RimP.